A 222-amino-acid chain; its full sequence is Latexin (222 aa).

The Cystatin LXN-type 1 domain maps to 1-97 (MEIPPTHYAA…NFTFEGEIGK (97 aa)). Residue Lys-55 is modified to N6-acetyllysine. The interval 98-117 (NPDEEDNTFYQSLMSLKRPL) is alpha-helical linker. The Cystatin LXN-type 2 domain occupies 118–222 (EAQDIPDNFG…SRLPKEGQAE (105 aa)).

This sequence belongs to the protease inhibitor I47 (latexin) family. As to expression, highly enriched in macrophages.

The protein resides in the cytoplasm. In terms of biological role, hardly reversible, non-competitive, and potent inhibitor of CPA1, CPA2 and CPA4. May play a role in inflammation. This chain is Latexin (Lxn), found in Mus musculus (Mouse).